We begin with the raw amino-acid sequence, 58 residues long: Ranakinin-N (58 aa).

Positions 1–22 are cleaved as a signal peptide; the sequence is MFTMKKSLLLLFFLGTISMSLC. Residues 23–43 constitute a propeptide that is removed on maturation; that stretch reads EEKRDADEEETEGEAKMEDIK. A disordered region spans residues 25–58; sequence KRDADEEETEGEAKMEDIKRAEAVPPGFTPFRKP. Basic and acidic residues predominate over residues 35 to 46; it reads GEAKMEDIKRAE.

Expressed by the skin glands.

The protein resides in the secreted. In terms of biological role, induces contraction of intestinal smooth muscle in isolated guinea pig ileum. May induce relaxation of arterial smooth muscle. May target bradykinin receptors (BDKRB). Lacks antibacterial activity against the Gram-positive bacterium S.aureus and the Gram-negative bacteria E.coli and B.dysenteria, and antifungal activity against C.albicans. The chain is Ranakinin-N from Hylarana nigrovittata (Black-striped frog).